Consider the following 223-residue polypeptide: Putative NAD(P)H nitroreductase SAB2397c (223 aa).

Belongs to the nitroreductase family. FMN serves as cofactor.

This is Putative NAD(P)H nitroreductase SAB2397c from Staphylococcus aureus (strain bovine RF122 / ET3-1).